The chain runs to 358 residues: Alanine racemase (358 aa).

Residue K34 is the Proton acceptor; specific for D-alanine of the active site. K34 carries the N6-(pyridoxal phosphate)lysine modification. R130 contacts substrate. Y254 serves as the catalytic Proton acceptor; specific for L-alanine. M302 is a binding site for substrate.

The protein belongs to the alanine racemase family. It depends on pyridoxal 5'-phosphate as a cofactor.

It catalyses the reaction L-alanine = D-alanine. Its pathway is amino-acid biosynthesis; D-alanine biosynthesis; D-alanine from L-alanine: step 1/1. Its function is as follows. Catalyzes the interconversion of L-alanine and D-alanine. May also act on other amino acids. This is Alanine racemase (alr) from Stutzerimonas stutzeri (strain A1501) (Pseudomonas stutzeri).